Here is a 153-residue protein sequence, read N- to C-terminus: UPF0756 membrane protein LSL_0936 (153 aa).

The next 5 helical transmembrane spans lie at 4-24 (WIFL…SLLI), 26-46 (GAVV…YPVI), 51-71 (INWG…TGQI), 86-106 (WIAV…VNLL), and 116-136 (LVIG…GPVI).

This sequence belongs to the UPF0756 family.

The protein resides in the cell membrane. The polypeptide is UPF0756 membrane protein LSL_0936 (Ligilactobacillus salivarius (strain UCC118) (Lactobacillus salivarius)).